Consider the following 124-residue polypeptide: Prefoldin subunit beta (124 aa).

It belongs to the prefoldin subunit beta family. Heterohexamer of two alpha and four beta subunits.

It localises to the cytoplasm. In terms of biological role, molecular chaperone capable of stabilizing a range of proteins. Seems to fulfill an ATP-independent, HSP70-like function in archaeal de novo protein folding. In Thermoplasma volcanium (strain ATCC 51530 / DSM 4299 / JCM 9571 / NBRC 15438 / GSS1), this protein is Prefoldin subunit beta (pfdB).